A 1491-amino-acid polypeptide reads, in one-letter code: Copper-transporting ATPase 1 (1491 aa).

Residues 1 to 644 (MEPSVDANSI…KREIKQWRGS (644 aa)) lie on the Cytoplasmic side of the membrane. HMA domains lie at 8-74 (NSIT…FDAL) and 85-151 (TNTV…LDMG). Residues Thr-18, Cys-19, and Cys-22 each contribute to the Cu(+) site. Thr-152 carries the post-translational modification Phosphothreonine. The HMA 3 domain occupies 171-237 (VMLKMKVEGM…QIEAVGFPAF (67 aa)). 2 residues coordinate Cu(+): Cys-182 and Cys-185. Residue Ser-270 is modified to Phosphoserine. The region spanning 277–343 (STTMFTIEGM…AIEAISPGQY (67 aa)) is the HMA 4 domain. Positions 288 and 291 each coordinate Cu(+). Thr-327 carries the post-translational modification Phosphothreonine. Ser-339, Ser-353, Ser-357, and Ser-362 each carry phosphoserine. HMA domains follow at residues 377-443 (QEAV…FDAA), 479-545 (NKCY…FGAM), and 555-621 (GILE…FEAS). Positions 388, 391, 490, 493, 566, and 569 each coordinate Cu(+). Residues 645 to 666 (FLVSLFFCIPVMGLMVYMMVMD) form a helical membrane-spanning segment. Residues 667-705 (HHLATLHHNQNMSNEEMINMHSAMFLERQILPGLSIMNL) are Extracellular-facing. Residue Asn-677 is glycosylated (N-linked (GlcNAc...) asparagine). A helical transmembrane segment spans residues 706 to 725 (LSLLLCLPVQFCGGWYFYIQ). Topologically, residues 726 to 732 (AYKALKH) are cytoplasmic. Residues 733–753 (KTANMDVLIVLATTIAFAYSL) traverse the membrane as a helical segment. At 754-772 (VILLVAMFERAKVNPITFF) the chain is on the extracellular side. The helical transmembrane segment at 773–793 (DTPPMLFVFIALGRWLEHIAK) threads the bilayer. Topologically, residues 794–926 (GKTSEALAKL…SKAPIQQFAD (133 aa)) are cytoplasmic. The helical transmembrane segment at 927-950 (KLSGYFVPFIVLVSIVTLLVWIII) threads the bilayer. Residues 951 to 980 (GFQNFEIVETYFPGYNRSISRTETIIRFAF) are Extracellular-facing. N-linked (GlcNAc...) asparagine glycosylation is present at Asn-966. A helical transmembrane segment spans residues 981–1002 (QASITVLCIACPCSLGLATPTA). Residues 1003-1347 (VMVGTGVGAQ…LSRKTVKRIR (345 aa)) lie on the Cytoplasmic side of the membrane. Asp-1035 acts as the 4-aspartylphosphate intermediate in catalysis. Glu-1072 lines the ATP pocket. Thr-1203 is modified (phosphothreonine). Asp-1292 and Asp-1296 together coordinate Mg(2+). Residues 1348-1365 (INFVFALIYNLVGIPIAA) form a helical membrane-spanning segment. Residues 1366-1376 (GVFLPIGLVLQ) lie on the Extracellular side of the membrane. A helical membrane pass occupies residues 1377–1396 (PWMGSAAMAASSVSVVLSSL). Residues 1397-1491 (FLKLYRKPTY…DFREDDDTTL (95 aa)) are Cytoplasmic-facing. 5 positions are modified to phosphoserine: Ser-1421, Ser-1423, Ser-1451, Ser-1454, and Ser-1457. An Endocytosis signal motif is present at residues 1458-1459 (LL). Phosphoserine occurs at positions 1460, 1464, 1467, and 1477. The segment at 1477–1491 (SLLVGDFREDDDTTL) is PDZD11-binding. The short motif at 1478–1479 (LL) is the Endocytosis signal element.

This sequence belongs to the cation transport ATPase (P-type) (TC 3.A.3) family. Type IB subfamily. In terms of assembly, monomer. Interacts with PDZD11. Interacts with ATOX1 and COMMD1. Interacts with TYRP1. Directly interacts with SOD3; this interaction is copper-dependent and is required for SOD3 activity. Widely expressed. Highly expressed in pituitary endocrine cells. Expressed in melanocytes (at protein level). Expressed in motor neuron (at protein level). Expressed in hippocampal neuron (at protein level). In the kidney, it is detected in the proximal and distal tubules (at protein level). Expressed in aorta (at protein level).

It localises to the golgi apparatus. The protein localises to the trans-Golgi network membrane. Its subcellular location is the cell membrane. It is found in the melanosome membrane. The protein resides in the early endosome membrane. It localises to the cell projection. The protein localises to the axon. Its subcellular location is the dendrite. It is found in the postsynaptic density. The catalysed reaction is Cu(+)(in) + ATP + H2O = Cu(+)(out) + ADP + phosphate + H(+). Functionally, ATP-driven copper (Cu(+)) ion pump that plays an important role in intracellular copper ion homeostasis. Within a catalytic cycle, acquires Cu(+) ion from donor protein on the cytoplasmic side of the membrane and delivers it to acceptor protein on the lumenal side. The transfer of Cu(+) ion across the membrane is coupled to ATP hydrolysis and is associated with a transient phosphorylation that shifts the pump conformation from inward-facing to outward-facing state. Under physiological conditions, at low cytosolic copper concentration, it is localized at the trans-Golgi network (TGN) where it transfers Cu(+) ions to cuproenzymes of the secretory pathway. Upon elevated cytosolic copper concentrations, it relocalizes to the plasma membrane where it is responsible for the export of excess Cu(+) ions. May play a dual role in neuron function and survival by regulating cooper efflux and neuronal transmission at the synapse as well as by supplying Cu(+) ions to enzymes such as PAM, TYR and SOD3. In the melanosomes of pigmented cells, provides copper cofactor to TYR to form an active TYR holoenzyme for melanin biosynthesis. The polypeptide is Copper-transporting ATPase 1 (Mus musculus (Mouse)).